Here is a 248-residue protein sequence, read N- to C-terminus: 2,3-bisphosphoglycerate-dependent phosphoglycerate mutase (248 aa).

Substrate-binding positions include 8–15 (RHGESLWN), 21–22 (TG), Arg60, 87–90 (ERHY), Lys98, 114–115 (RR), and 183–184 (GN). Catalysis depends on His9, which acts as the Tele-phosphohistidine intermediate. Residue Glu87 is the Proton donor/acceptor of the active site.

It belongs to the phosphoglycerate mutase family. BPG-dependent PGAM subfamily.

The enzyme catalyses (2R)-2-phosphoglycerate = (2R)-3-phosphoglycerate. The protein operates within carbohydrate degradation; glycolysis; pyruvate from D-glyceraldehyde 3-phosphate: step 3/5. Its function is as follows. Catalyzes the interconversion of 2-phosphoglycerate and 3-phosphoglycerate. This is 2,3-bisphosphoglycerate-dependent phosphoglycerate mutase from Methanospirillum hungatei JF-1 (strain ATCC 27890 / DSM 864 / NBRC 100397 / JF-1).